Reading from the N-terminus, the 945-residue chain is MRARSGVRSALLLALLLCWDPTPSLAGVDSAGQVLPDSYPSAPAEQLPYFLLEPQDAYIVKNKPVELHCRAFPATQIYFKCNGEWVSQNDHVTQESLDEATGLRVREVQIEVSRQQVEELFGLEDYWCQCVAWSSSGTTKSRRAYIRIAYLRKNFDQEPLAKEVPLDHEVLLQCRPPEGVPVAEVEWLKNEDVIDPAQDTNFLLTIDHNLIIRQARLSDTANYTCVAKNIVAKRRSTTATVIVYVNGGWSSWAEWSPCSNRCGRGWQKRTRTCTNPAPLNGGAFCEGQAFQKTACTTVCPVDGAWTEWSKWSACSTECAHWRSRECMAPPPQNGGRDCSGTLLDSKNCTDGLCVLNQRTLNDPKSHPLETSGDVALYAGLVVAVFVVVAVLMAVGVIVYRRNCRDFDTDITDSSAALTGGFHPVNFKTARPNNPQLLHPSAPPDLTASAGIYRGPVYALQDSADKIPMTNSPLLDPLPSLKIKVYNSSTIGSGSGLADGADLLGVLPPGTYPGDFSRDTHFLHLRSASLGSQHLLGLPRDPSSSVSGTFGCLGGRLSLPGTGVSLLVPNGAIPQGKFYDLYLHINKAESTLPLSEGSQTVLSPSVTCGPTGLLLCRPVVLTVPHCAEVIAGDWIFQLKTQAHQGHWEEVVTLDEETLNTPCYCQLEAKSCHILLDQLGTYVFMGESYSRSAVKRLQLAIFAPALCTSLEYSLRVYCLEDTPVALKEVLELERTLGGYLVEEPKPLLFKDSYHNLRLSLHDIPHAHWRSKLLAKYQEIPFYHVWNGSQRALHCTFTLERHSLASTEFTCKVCVRQVEGEGQIFQLHTTLAETPAGSLDALCSAPGNAITTQLGPYAFKIPLSIRQKICSSLDAPNSRGNDWRLLAQKLSMDRYLNYFATKASPTGVILDLWEARQQDDGDLNSLASALEEMGKSEMLVAMATDGDC.

The first 26 residues, 1–26 (MRARSGVRSALLLALLLCWDPTPSLA), serve as a signal peptide directing secretion. Over 27–377 (GVDSAGQVLP…LETSGDVALY (351 aa)) the chain is Extracellular. The Ig-like domain maps to 48-145 (PYFLLEPQDA…SGTTKSRRAY (98 aa)). Disulfide bonds link C69–C130, C81–C128, C174–C225, C258–C295, C262–C299, C273–C285, C314–C348, C318–C353, and C326–C338. Positions 153 to 242 (KNFDQEPLAK…KRRSTTATVI (90 aa)) constitute an Ig-like C2-type domain. N222 carries N-linked (GlcNAc...) asparagine glycosylation. TSP type-1 domains are found at residues 246–300 (NGGW…TVCP) and 302–354 (DGAW…GLCV). N-linked (GlcNAc...) asparagine glycosylation occurs at N347. A helical transmembrane segment spans residues 378 to 398 (AGLVVAVFVVVAVLMAVGVIV). The Cytoplasmic segment spans residues 399–945 (YRRNCRDFDT…LVAMATDGDC (547 aa)). The S-palmitoyl cysteine moiety is linked to residue C403. The ZU5 domain occupies 543-686 (SSVSGTFGCL…LGTYVFMGES (144 aa)). Position 581 is a phosphotyrosine (Y581). Positions 689–838 (RSAVKRLQLA…AETPAGSLDA (150 aa)) are UPA domain. Positions 707-725 (SLEYSLRVYCLEDTPVALK) are interaction with DCC. Residues 865–943 (KICSSLDAPN…EMLVAMATDG (79 aa)) enclose the Death domain.

This sequence belongs to the unc-5 family. In terms of assembly, interacts with the cytoplasmic part of DCC. Interacts with GNAI2 via its cytoplasmic part. Interacts (via death domain) with DAPK1 (via death domain). Interacts (via extracellular domain) with FLRT2 and FLRT3 (via extracellular domain), but has higher affinity for FLRT3. Identified in a complex with FLRT3 and ADGRL3; does not interact with ADGRL3 by itself. Post-translationally, phosphorylated on cytoplasmic tyrosine residues. In terms of processing, palmitoylation is required for pro-apoptotic activity, but not for location at lipid rafts. Proteolytically cleaved by caspases during apoptosis. The cleavage does not take place when the receptor is associated with netrin ligand. Its cleavage by caspases is required to induce apoptosis. As to expression, highly expressed in brain. Expressed in lung during late development. Expressed during early blood vessel formation, in the semicircular canal and in a dorsal to ventral gradient in the retina.

It localises to the cell membrane. The protein resides in the membrane raft. In terms of biological role, receptor for netrin required for axon guidance. Mediates axon repulsion of neuronal growth cones in the developing nervous system upon ligand binding. Axon repulsion in growth cones may be caused by its association with DCC that may trigger signaling for repulsion. Functions as a netrin receptor that negatively regulates vascular branching during angiogenesis. Mediates retraction of tip cell filopodia on endothelial growth cones in response to netrin. It also acts as a dependence receptor required for apoptosis induction when not associated with netrin ligand. Mediates apoptosis by activating DAPK1. In the absence of NTN1, activates DAPK1 by reducing its autoinhibitory phosphorylation at Ser-308 thereby increasing its catalytic activity. The sequence is that of Netrin receptor UNC5B (Unc5b) from Mus musculus (Mouse).